The sequence spans 305 residues: Ribosomal protein L11 methyltransferase (305 aa).

4 residues coordinate S-adenosyl-L-methionine: threonine 149, glycine 176, aspartate 198, and asparagine 240.

The protein belongs to the methyltransferase superfamily. PrmA family.

It is found in the cytoplasm. It catalyses the reaction L-lysyl-[protein] + 3 S-adenosyl-L-methionine = N(6),N(6),N(6)-trimethyl-L-lysyl-[protein] + 3 S-adenosyl-L-homocysteine + 3 H(+). Its function is as follows. Methylates ribosomal protein L11. The protein is Ribosomal protein L11 methyltransferase of Trichlorobacter lovleyi (strain ATCC BAA-1151 / DSM 17278 / SZ) (Geobacter lovleyi).